Consider the following 251-residue polypeptide: Ditrans,polycis-undecaprenyl-diphosphate synthase ((2E,6E)-farnesyl-diphosphate specific) (251 aa).

Residue aspartate 20 is part of the active site. Aspartate 20 provides a ligand contact to Mg(2+). Substrate is bound by residues 21 to 24 (GNGR), tryptophan 25, arginine 33, histidine 37, and 65 to 67 (SSE). Catalysis depends on asparagine 68, which acts as the Proton acceptor. Residues tryptophan 69, arginine 71, arginine 188, and 194–196 (RIS) each bind substrate. Glutamate 207 lines the Mg(2+) pocket.

The protein belongs to the UPP synthase family. In terms of assembly, homodimer. The cofactor is Mg(2+).

It carries out the reaction 8 isopentenyl diphosphate + (2E,6E)-farnesyl diphosphate = di-trans,octa-cis-undecaprenyl diphosphate + 8 diphosphate. In terms of biological role, catalyzes the sequential condensation of isopentenyl diphosphate (IPP) with (2E,6E)-farnesyl diphosphate (E,E-FPP) to yield (2Z,6Z,10Z,14Z,18Z,22Z,26Z,30Z,34E,38E)-undecaprenyl diphosphate (di-trans,octa-cis-UPP). UPP is the precursor of glycosyl carrier lipid in the biosynthesis of bacterial cell wall polysaccharide components such as peptidoglycan and lipopolysaccharide. The protein is Ditrans,polycis-undecaprenyl-diphosphate synthase ((2E,6E)-farnesyl-diphosphate specific) of Vibrio vulnificus (strain CMCP6).